Consider the following 316-residue polypeptide: ATP synthase gamma chain (316 aa).

The protein belongs to the ATPase gamma chain family. In terms of assembly, F-type ATPases have 2 components, CF(1) - the catalytic core - and CF(0) - the membrane proton channel. CF(1) has five subunits: alpha(3), beta(3), gamma(1), delta(1), epsilon(1). CF(0) has three main subunits: a, b and c.

The protein localises to the cellular thylakoid membrane. In terms of biological role, produces ATP from ADP in the presence of a proton gradient across the membrane. The gamma chain is believed to be important in regulating ATPase activity and the flow of protons through the CF(0) complex. The polypeptide is ATP synthase gamma chain (Prochlorococcus marinus (strain AS9601)).